Reading from the N-terminus, the 111-residue chain is Ribonuclease P protein component (111 aa).

The protein belongs to the RnpA family. In terms of assembly, consists of a catalytic RNA component (M1 or rnpB) and a protein subunit.

It carries out the reaction Endonucleolytic cleavage of RNA, removing 5'-extranucleotides from tRNA precursor.. Its function is as follows. RNaseP catalyzes the removal of the 5'-leader sequence from pre-tRNA to produce the mature 5'-terminus. It can also cleave other RNA substrates such as 4.5S RNA. The protein component plays an auxiliary but essential role in vivo by binding to the 5'-leader sequence and broadening the substrate specificity of the ribozyme. The sequence is that of Ribonuclease P protein component from Borreliella afzelii (strain PKo) (Borrelia afzelii).